Reading from the N-terminus, the 193-residue chain is Xanthine phosphoribosyltransferase (193 aa).

Positions 20 and 27 each coordinate xanthine. 127–131 (AYGNA) is a binding site for 5-phospho-alpha-D-ribose 1-diphosphate. Residue Lys155 participates in xanthine binding.

Belongs to the purine/pyrimidine phosphoribosyltransferase family. Xpt subfamily. Homodimer.

Its subcellular location is the cytoplasm. The catalysed reaction is XMP + diphosphate = xanthine + 5-phospho-alpha-D-ribose 1-diphosphate. The protein operates within purine metabolism; XMP biosynthesis via salvage pathway; XMP from xanthine: step 1/1. Its function is as follows. Converts the preformed base xanthine, a product of nucleic acid breakdown, to xanthosine 5'-monophosphate (XMP), so it can be reused for RNA or DNA synthesis. The sequence is that of Xanthine phosphoribosyltransferase from Porphyromonas gingivalis (strain ATCC BAA-308 / W83).